A 161-amino-acid polypeptide reads, in one-letter code: Cytochrome c-type biogenesis protein CcmE (161 aa).

The Cytoplasmic segment spans residues 1 to 8 (MNPRRKKR). The helical; Signal-anchor for type II membrane protein transmembrane segment at 9-29 (LGLILALFVGISATVGLMLYA) threads the bilayer. The Periplasmic segment spans residues 30-161 (LNQNMDLFYT…TEQQKQGTGQ (132 aa)). Residues histidine 129 and tyrosine 133 each coordinate heme. The disordered stretch occupies residues 142 to 161 (MKKTHEPLQYTEQQKQGTGQ). A compositionally biased stretch (polar residues) spans 151-161 (YTEQQKQGTGQ).

It belongs to the CcmE/CycJ family.

Its subcellular location is the cell inner membrane. Functionally, heme chaperone required for the biogenesis of c-type cytochromes. Transiently binds heme delivered by CcmC and transfers the heme to apo-cytochromes in a process facilitated by CcmF and CcmH. This chain is Cytochrome c-type biogenesis protein CcmE, found in Aliivibrio fischeri (strain ATCC 700601 / ES114) (Vibrio fischeri).